We begin with the raw amino-acid sequence, 130 residues long: MTLMDPLANALTNIRNNEIRGNVKCRITPASKLIGRVLRTMQKEGYIGEFEYVDDGRAGKFIVELEGNINHCGVIKPRHAVKKDEFEKFEKRYLPAKNFGIIIVSTPEGIMTHKEAKDRGIGGRLLAYVY.

Belongs to the universal ribosomal protein uS8 family. In terms of assembly, part of the 30S ribosomal subunit.

In terms of biological role, one of the primary rRNA binding proteins, it binds directly to 16S rRNA central domain where it helps coordinate assembly of the platform of the 30S subunit. The polypeptide is Small ribosomal subunit protein uS8 (Methanothermobacter thermautotrophicus (strain ATCC 29096 / DSM 1053 / JCM 10044 / NBRC 100330 / Delta H) (Methanobacterium thermoautotrophicum)).